We begin with the raw amino-acid sequence, 126 residues long: Small nuclear ribonucleoprotein Sm D3 (126 aa).

Residue Ser-2 is modified to N-acetylserine. Positions Val-5–Leu-77 constitute a Sm domain. A run of 5 repeats spans residues Arg-110 to Gly-111, Arg-112 to Gly-113, Arg-114 to Gly-115, Met-116 to Gly-117, and Arg-118 to Gly-119. Residues Arg-110–Gly-119 form a 5 X 2 AA tandem repeats of [RM]-G; required for interaction with SMN1 region.

Belongs to the snRNP core protein family. As to quaternary structure, core component of the spliceosomal U1, U2, U4 and U5 small nuclear ribonucleoproteins (snRNPs), the building blocks of the spliceosome. Most spliceosomal snRNPs contain a common set of Sm proteins, SNRPB, SNRPD1, SNRPD2, SNRPD3, SNRPE, SNRPF and SNRPG that assemble in a heptameric protein ring on the Sm site of the small nuclear RNA to form the core snRNP. Component of the U1 snRNP. The U1 snRNP is composed of the U1 snRNA and the 7 core Sm proteins SNRPB, SNRPD1, SNRPD2, SNRPD3, SNRPE, SNRPF and SNRPG, and at least three U1 snRNP-specific proteins SNRNP70/U1-70K, SNRPA/U1-A and SNRPC/U1-C. Component of the U4/U6-U5 tri-snRNP complex composed of the U4, U6 and U5 snRNAs and at least PRPF3, PRPF4, PRPF6, PRPF8, PRPF31, SNRNP200, TXNL4A, SNRNP40, SNRPB, SNRPD1, SNRPD2, SNRPD3, SNRPE, SNRPF, SNRPG, DDX23, CD2BP2, PPIH, SNU13, EFTUD2, SART1 and USP39, plus LSM2, LSM3, LSM4, LSM5, LSM6, LSM7 and LSM8. Component of the U7 snRNP complex, or U7 Sm protein core complex, that is composed of the U7 snRNA and at least LSM10, LSM11, SNRPB, SNRPD3, SNRPE, SNRPF and SNRPG; the complex does not contain SNRPD1 and SNRPD2. Component of the minor spliceosome, which splices U12-type introns. Part of the SMN-Sm complex that contains SMN1, GEMIN2/SIP1, DDX20/GEMIN3, GEMIN4, GEMIN5, GEMIN6, GEMIN7, GEMIN8, STRAP/UNRIP and the Sm proteins SNRPB, SNRPD1, SNRPD2, SNRPD3, SNRPE, SNRPF and SNRPG; catalyzes core snRNPs assembly. Forms a 6S pICln-Sm complex composed of CLNS1A/pICln, SNRPD1, SNRPD2, SNRPE, SNRPF and SNRPG; ring-like structure where CLNS1A/pICln mimics additional Sm proteins and which is unable to assemble into the core snRNP. Interacts (via C-terminus) with SMN1 (via Tudor domain); the interaction is direct. In terms of processing, methylated on arginine residues by PRMT5 and PRMT7; probable asymmetric dimethylation which is required for assembly and biogenesis of snRNPs.

The protein resides in the cytoplasm. It localises to the cytosol. The protein localises to the nucleus. In terms of biological role, plays a role in pre-mRNA splicing as a core component of the spliceosomal U1, U2, U4 and U5 small nuclear ribonucleoproteins (snRNPs), the building blocks of the spliceosome. Component of both the pre-catalytic spliceosome B complex and activated spliceosome C complexes. As a component of the minor spliceosome, involved in the splicing of U12-type introns in pre-mRNAs. As part of the U7 snRNP it is involved in histone pre-mRNA 3'-end processing. The protein is Small nuclear ribonucleoprotein Sm D3 (SNRPD3) of Homo sapiens (Human).